The chain runs to 65 residues: Large ribosomal subunit protein bL32 (65 aa).

This sequence belongs to the bacterial ribosomal protein bL32 family.

The protein is Large ribosomal subunit protein bL32 (rpmF) of Rickettsia prowazekii (strain Madrid E).